Here is a 161-residue protein sequence, read N- to C-terminus: Epithelial membrane protein 2 (161 aa).

Helical transmembrane passes span 1–21 (MLVI…LLFI), 67–87 (TMIL…LQLF), 95–115 (FVFT…GASI), and 137–157 (FVVA…YLVL).

The protein belongs to the PMP-22/EMP/MP20 family. As to expression, expressed in the arches, orbits, pectoral fins, vessels, pronephric renal tubules, and glomeruli.

The protein localises to the golgi apparatus membrane. It localises to the cell membrane. It is found in the apical cell membrane. The protein resides in the membrane raft. Its subcellular location is the cytoplasm. The protein localises to the nucleus. It localises to the perinuclear region. Functions as a key regulator of cell membrane composition by regulating protein surface expression. Also, plays a role in regulation of processes including cell migration, cell proliferation, cell contraction and cell adhesion. May play a role in glomerular filtration. This chain is Epithelial membrane protein 2 (emp2), found in Danio rerio (Zebrafish).